The following is a 1183-amino-acid chain: Putative ATP-dependent RNA helicase PB1A10.06c (1183 aa).

2 disordered regions span residues 1–92 (MGRL…KKRL) and 165–315 (ETTT…RASR). Positions 60–81 (VPKEERQKRKQELKDQLLKENE) are enriched in basic and acidic residues. Composition is skewed to low complexity over residues 165–176 (ETTTTKSSTAET) and 184–196 (TRSG…STGT). Over residues 224-251 (EDPEYDSAEEDYLSTDSEEFSEDSDNSS) the composition is skewed to acidic residues. The segment covering 252-270 (EENKDTNEPSTKDAEKTVP) has biased composition (basic and acidic residues). Residues 292–308 (ENEDFDLETSEDDSSDD) are compositionally biased toward acidic residues. The 178-residue stretch at 408–585 (MEQIFANDVV…KLLFSVPPPI (178 aa)) folds into the Helicase ATP-binding domain. 421-428 (GATGSGKT) contributes to the ATP binding site. The DEAH box signature appears at 522–525 (DEAH). Residues 611-831 (AFDKVCLIHK…SIVLQMKNMN (221 aa)) form the Helicase C-terminal domain. A compositionally biased stretch (acidic residues) spans 673–683 (EDLQSETEDID). The interval 673-696 (EDLQSETEDIDQVPTSSSSSVTYD) is disordered.

The protein belongs to the DEAD box helicase family. DEAH subfamily.

The protein resides in the nucleus. The protein localises to the nucleolus. The enzyme catalyses ATP + H2O = ADP + phosphate + H(+). This Schizosaccharomyces pombe (strain 972 / ATCC 24843) (Fission yeast) protein is Putative ATP-dependent RNA helicase PB1A10.06c.